A 289-amino-acid polypeptide reads, in one-letter code: MMLPEACVATILSFTTPADTISSAAVSSVFRVAGDSDFVWEKFLPTDYCHVISRSTDPHRIFSSKKELYRCLCESILIDNGRKIFKIEKLSGKISYILSSRDLSITWSDQRHYWSWSPRSDSRFSEGVQLIMTDWLEIIGKIQTGALSPNTNYGAYLIMKVTSRAYGLDLVPAETSIKVGNGEKKIKSTYLSCLDNKKQQMERVFYGQREQRMATHEVVRSHRREPEVRDDGWMEIELGEFETGSGEGDDDKEVVMSLTEVKGYQLKGGIAIDGIEVRPKPLKVRAGTN.

The region spanning Met-1–Phe-43 is the F-box domain.

This chain is F-box protein PP2-B15 (PP2B15), found in Arabidopsis thaliana (Mouse-ear cress).